Reading from the N-terminus, the 793-residue chain is Probable phosphoketolase (793 aa).

This sequence belongs to the XFP family. Requires thiamine diphosphate as cofactor.

This Gloeobacter violaceus (strain ATCC 29082 / PCC 7421) protein is Probable phosphoketolase.